A 732-amino-acid chain; its full sequence is Elongation factor 2 (732 aa).

Residues 19–260 (ERIRNIGIAA…MVVRHLPSPI (242 aa)) enclose the tr-type G domain. GTP contacts are provided by residues 28-35 (AHIDHGKT), 94-98 (DTPGH), and 148-151 (NKVD). A Diphthamide modification is found at histidine 597.

The protein belongs to the TRAFAC class translation factor GTPase superfamily. Classic translation factor GTPase family. EF-G/EF-2 subfamily.

The protein resides in the cytoplasm. In terms of biological role, catalyzes the GTP-dependent ribosomal translocation step during translation elongation. During this step, the ribosome changes from the pre-translocational (PRE) to the post-translocational (POST) state as the newly formed A-site-bound peptidyl-tRNA and P-site-bound deacylated tRNA move to the P and E sites, respectively. Catalyzes the coordinated movement of the two tRNA molecules, the mRNA and conformational changes in the ribosome. The polypeptide is Elongation factor 2 (fusA) (Pyrococcus horikoshii (strain ATCC 700860 / DSM 12428 / JCM 9974 / NBRC 100139 / OT-3)).